Reading from the N-terminus, the 305-residue chain is LysM and putative peptidoglycan-binding domain-containing protein 3 (305 aa).

Topologically, residues 1–216 (MAGRNQNRTV…PYYGADWGIG (216 aa)) are extracellular. 2 N-linked (GlcNAc...) asparagine glycosylation sites follow: N7 and N26. S55 carries the phosphoserine modification. The 45-residue stretch at 65 to 109 (LTKDIQEGDTLNAVALQYCCTVADIKRVNNLISDQDFFALRSIKI) folds into the LysM domain. N-linked (GlcNAc...) asparagine glycosylation occurs at N199. A helical membrane pass occupies residues 217 to 237 (WWTAVVIMLIVGIITPVFYLL). Topologically, residues 238–305 (YYEILAKVDV…PQAHDAQHKT (68 aa)) are cytoplasmic. The segment at 253-305 (VGSSHLHPGLTPPTQHREMENEIGPTKGIPVGQQDDHKLYRQDPQAHDAQHKT) is disordered. A compositionally biased stretch (basic and acidic residues) spans 286 to 305 (QDDHKLYRQDPQAHDAQHKT).

The protein resides in the cell membrane. It localises to the golgi apparatus. Functionally, essential for Golgi structural integrity. This Mus musculus (Mouse) protein is LysM and putative peptidoglycan-binding domain-containing protein 3 (Lysmd3).